A 245-amino-acid polypeptide reads, in one-letter code: GATA zinc finger domain-containing protein 1 (245 aa).

A GATA-type zinc finger spans residues 9–33; it reads CSMCKTNTSSMWKKGSQGEILCNNC. Residues 39–70 show a composition bias toward low complexity; the sequence is TAAGGNNNNNSSSSTSGSSSYTGTTFASTSTS. Residues 39–110 form a disordered region; it reads TAAGGNNNNN…PAAEKKVSTK (72 aa). The segment covering 71–80 has biased composition (polar residues); it reads QQSNGGNTKQ.

It is found in the nucleus. Functionally, component of some chromatin complex recruited to chromatin sites methylated 'Lys-4' of histone H3 (H3K4me), with a preference for trimethylated form (H3K4me3). The sequence is that of GATA zinc finger domain-containing protein 1 (gatad1) from Xenopus laevis (African clawed frog).